Reading from the N-terminus, the 310-residue chain is tRNA pseudouridine synthase B (310 aa).

Aspartate 47 acts as the Nucleophile in catalysis.

This sequence belongs to the pseudouridine synthase TruB family. Type 1 subfamily.

It carries out the reaction uridine(55) in tRNA = pseudouridine(55) in tRNA. Responsible for synthesis of pseudouridine from uracil-55 in the psi GC loop of transfer RNAs. This is tRNA pseudouridine synthase B from Caulobacter sp. (strain K31).